Here is a 118-residue protein sequence, read N- to C-terminus: Cell division protein FtsB (118 aa).

Residues 1–3 lie on the Cytoplasmic side of the membrane; that stretch reads MRL. A helical transmembrane segment spans residues 4 to 21; sequence LFLVLLVLLGLIQYPLWL. At 22-118 the chain is on the periplasmic side; it reads GKGGWFKVWD…PRPPATPPRR (97 aa). The stretch at 28-62 forms a coiled coil; that stretch reads KVWDLQRQVAEQRETNDGLRARNTALEAEVRDLAT. The tract at residues 88–118 is disordered; that stretch reads LPPGTPLPSGNSTPQASALSKPRPPATPPRR. Positions 95 to 105 are enriched in polar residues; the sequence is PSGNSTPQASA. Residues 109 to 118 show a composition bias toward pro residues; sequence PRPPATPPRR.

This sequence belongs to the FtsB family. In terms of assembly, part of a complex composed of FtsB, FtsL and FtsQ.

It localises to the cell inner membrane. Functionally, essential cell division protein. May link together the upstream cell division proteins, which are predominantly cytoplasmic, with the downstream cell division proteins, which are predominantly periplasmic. In Bordetella parapertussis (strain 12822 / ATCC BAA-587 / NCTC 13253), this protein is Cell division protein FtsB.